The chain runs to 33 residues: Dermaseptin-4 (33 aa).

Leucine 33 carries the leucine amide modification.

Expressed by the skin glands.

It is found in the secreted. Its function is as follows. Has antiparasitic activity against trypomastigote form of T.cruzi (IC(50)=0.25 uM) in vitro but not against L.infantum. Probably acts by permeabilizing cell membranes. In vitro, shows no cytotoxicity against macrophages. Has antibacterial activity. This is Dermaseptin-4 from Pithecopus nordestinus (Northeastern Brazilian leaf frog).